The chain runs to 126 residues: Holo-[acyl-carrier-protein] synthase (126 aa).

The Mg(2+) site is built by D8 and E60.

The protein belongs to the P-Pant transferase superfamily. AcpS family. Mg(2+) is required as a cofactor.

The protein localises to the cytoplasm. It catalyses the reaction apo-[ACP] + CoA = holo-[ACP] + adenosine 3',5'-bisphosphate + H(+). In terms of biological role, transfers the 4'-phosphopantetheine moiety from coenzyme A to a Ser of acyl-carrier-protein. The protein is Holo-[acyl-carrier-protein] synthase of Ehrlichia canis (strain Jake).